The chain runs to 155 residues: Deoxyuridine 5'-triphosphate nucleotidohydrolase (155 aa).

Residues 74 to 76, asparagine 87, and 91 to 93 each bind substrate; these read RSG and LID.

It belongs to the dUTPase family. It depends on Mg(2+) as a cofactor.

The enzyme catalyses dUTP + H2O = dUMP + diphosphate + H(+). It participates in pyrimidine metabolism; dUMP biosynthesis; dUMP from dCTP (dUTP route): step 2/2. In terms of biological role, this enzyme is involved in nucleotide metabolism: it produces dUMP, the immediate precursor of thymidine nucleotides and it decreases the intracellular concentration of dUTP so that uracil cannot be incorporated into DNA. This is Deoxyuridine 5'-triphosphate nucleotidohydrolase from Xanthomonas oryzae pv. oryzae (strain MAFF 311018).